The primary structure comprises 683 residues: Eukaryotic translation initiation factor 3 subunit B (683 aa).

The disordered stretch occupies residues 1-25 (MAKKKGEEQDFEEEPNFDDPEGFVD). Acidic residues predominate over residues 9–25 (QDFEEEPNFDDPEGFVD). The RRM domain occupies 49–133 (NVIVVDNIPV…YTLLVNRFAD (85 aa)). WD repeat units lie at residues 199 to 238 (KRER…KVNK), 240 to 279 (AHSN…EKRT), 283 to 321 (DGMS…LLDM), 324 to 359 (IRVE…TLMA), 435 to 477 (EVKE…EPVL), and 522 to 567 (GDHY…KRVN). A coiled-coil region spans residues 611-638 (MTRASKELIEKRAKLREQFTEYRSKRVK).

This sequence belongs to the eIF-3 subunit B family. As to quaternary structure, component of the eukaryotic translation initiation factor 3 (eIF-3) complex.

It is found in the cytoplasm. Its function is as follows. RNA-binding component of the eukaryotic translation initiation factor 3 (eIF-3) complex, which is involved in protein synthesis of a specialized repertoire of mRNAs and, together with other initiation factors, stimulates binding of mRNA and methionyl-tRNAi to the 40S ribosome. The eIF-3 complex specifically targets and initiates translation of a subset of mRNAs involved in cell proliferation. This chain is Eukaryotic translation initiation factor 3 subunit B, found in Anopheles gambiae (African malaria mosquito).